The chain runs to 256 residues: Omega-amidase YafV (256 aa).

The CN hydrolase domain occupies 4–234; sequence LKITLLQQPL…ATRIDAELSM (231 aa). Glu42 serves as the catalytic Proton acceptor. Lys107 is a catalytic residue. The active-site Nucleophile is Cys141.

This sequence belongs to the carbon-nitrogen hydrolase superfamily. NIT1/NIT2 family.

The catalysed reaction is a monoamide of a dicarboxylate + H2O = a dicarboxylate + NH4(+). Its function is as follows. Hydrolyzes alpha-ketoglutaramate (a-KGM) to alpha-ketoglutarate (alpha-KG) and ammonia (specific activity 6.65 umol/min/mg), has weak activity on L-glutamine, almost no activity on deaminated glutathione (dGSH) and none on glutathione. May function as a metabolite repair enzyme. The sequence is that of Omega-amidase YafV (yafV) from Escherichia coli (strain B / BL21-DE3).